The primary structure comprises 273 residues: Nickel permease LarQ (273 aa).

5 helical membrane passes run L64–W84, M117–L137, L159–I179, L210–Y230, and H251–W271.

The protein belongs to the CbiQ family. As to quaternary structure, may form an energy-coupling factor (ECF) transporter complex composed of an ATP-binding protein (A component, LarO), a transmembrane protein (T component, LarQ) and a fused possible substrate-capture protein (S component, LarMN) of unknown stoichiometry.

It is found in the cell membrane. Its function is as follows. Probable transmembrane component of the energy-coupling factor (ECF) transporter complex LarMNQO involved in nickel import. In Lactiplantibacillus plantarum (strain ATCC BAA-793 / NCIMB 8826 / WCFS1) (Lactobacillus plantarum), this protein is Nickel permease LarQ.